The primary structure comprises 136 residues: Small ribosomal subunit protein uS9 (136 aa).

This sequence belongs to the universal ribosomal protein uS9 family.

The protein is Small ribosomal subunit protein uS9 of Borrelia garinii subsp. bavariensis (strain ATCC BAA-2496 / DSM 23469 / PBi) (Borreliella bavariensis).